We begin with the raw amino-acid sequence, 511 residues long: Apolipoprotein N-acyltransferase (511 aa).

Transmembrane regions (helical) follow at residues 7–29, 58–78, 90–110, 125–145, 163–183, and 192–212; these read PGWPGHLLALAAGALTPLALAPF, GWWYGFGAFGAGTSWIYVSIH, LLMLGFTAGVAFFFALPAWLW, LAFAALWLALELFRSWFLTGF, VPVGGVWLSSFVIALSAALLV, and GASLLLGLVLLLGPWAAGLYL. Residues 230–470 form the CN hydrolase domain; sequence IQGNIAQELK…QGILRGEVIP (241 aa). Glu-269 acts as the Proton acceptor in catalysis. Lys-330 is a catalytic residue. Cys-382 acts as the Nucleophile in catalysis. A helical transmembrane segment spans residues 482–502; sequence VWPLAGLAGVLLLWALLGRQL.

It belongs to the CN hydrolase family. Apolipoprotein N-acyltransferase subfamily.

The protein resides in the cell inner membrane. It carries out the reaction N-terminal S-1,2-diacyl-sn-glyceryl-L-cysteinyl-[lipoprotein] + a glycerophospholipid = N-acyl-S-1,2-diacyl-sn-glyceryl-L-cysteinyl-[lipoprotein] + a 2-acyl-sn-glycero-3-phospholipid + H(+). Its pathway is protein modification; lipoprotein biosynthesis (N-acyl transfer). Catalyzes the phospholipid dependent N-acylation of the N-terminal cysteine of apolipoprotein, the last step in lipoprotein maturation. This chain is Apolipoprotein N-acyltransferase, found in Pseudomonas aeruginosa (strain LESB58).